We begin with the raw amino-acid sequence, 185 residues long: Transmembrane protein 140 (185 aa).

Topologically, residues 1–11 are cytoplasmic; the sequence is MAGPRPRWRDQ. A helical transmembrane segment spans residues 12–32; the sequence is LLFMSIIVLVIVVICLMFYAL. Topologically, residues 33-77 are extracellular; that stretch reads LWEAGNLTDLPNLRIGFYNFCLWNEDTSTLQCHQFPELEALGVPR. N-linked (GlcNAc...) asparagine glycosylation is present at Asn38. A helical membrane pass occupies residues 78 to 98; the sequence is VGLGLARLGVYGSLVLTLFAP. The Cytoplasmic segment spans residues 99 to 114; the sequence is QPLLLAQCNSDERAWR. A helical membrane pass occupies residues 115–135; it reads LAVGFLAVSSVLLAGGLGLFL. Topologically, residues 136–150 are extracellular; sequence SYVWKWVRLSLPGPG. The helical transmembrane segment at 151–171 threads the bilayer; it reads FLALGSAQALLILLLIAMAVF. Over 172-185 the chain is Cytoplasmic; it reads PLRAERAESKLESC.

As to expression, expression significantly higher in gliomas than in normal brain tissues.

The protein resides in the membrane. This chain is Transmembrane protein 140 (TMEM140), found in Homo sapiens (Human).